Here is a 178-residue protein sequence, read N- to C-terminus: Large ribosomal subunit protein uL6 (178 aa).

The protein belongs to the universal ribosomal protein uL6 family. In terms of assembly, part of the 50S ribosomal subunit.

Functionally, this protein binds to the 23S rRNA, and is important in its secondary structure. It is located near the subunit interface in the base of the L7/L12 stalk, and near the tRNA binding site of the peptidyltransferase center. This is Large ribosomal subunit protein uL6 from Francisella philomiragia subsp. philomiragia (strain ATCC 25017 / CCUG 19701 / FSC 153 / O#319-036).